We begin with the raw amino-acid sequence, 531 residues long: Polypyrimidine tract-binding protein 2 (531 aa).

M1 bears the N-acetylmethionine mark. A phosphoserine mark is found at S26 and S27. RRM domains lie at 59 to 133 (RVLH…YSNH) and 181 to 257 (LRII…FSKL). A Phosphoserine modification is found at S308. RRM domains are found at residues 338 to 412 (TVLL…LSKH) and 455 to 529 (ATLH…FSKS).

In terms of assembly, monomer. Interacts with NOVA1; the interaction is direct. Identified in a mRNP complex, at least composed of DHX9, DDX3X, ELAVL1, HNRNPU, IGF2BP1, ILF3, PABPC1, PCBP2, PTBP2, STAU1, STAU2, SYNCRIP and YBX1. Part of a ternary complex containing KHSRP and HNRPH1. Interacts with NOVA2; the interaction is direct.

Its subcellular location is the nucleus. In terms of biological role, RNA-binding protein which binds to intronic polypyrimidine tracts and mediates negative regulation of exons splicing. May antagonize in a tissue-specific manner the ability of NOVA1 to activate exon selection. In addition to its function in pre-mRNA splicing, plays also a role in the regulation of translation. The protein is Polypyrimidine tract-binding protein 2 of Rattus norvegicus (Rat).